The sequence spans 290 residues: Aquaporin PIP2-1 (290 aa).

Positions 1-20 are disordered; sequence MGKDDVIESGAGGGEFAAKD. Transmembrane regions (helical) follow at residues 43-63 and 80-100; these read AVIA…ATVI and CGGV…FVLV. Residues 112–114 carry the NPA 1 motif; sequence NPA. The next 3 membrane-spanning stretches (helical) occupy residues 131–151, 173–193, and 205–225; these read LLYI…VKAF, GTGL…VFSA, and VPVL…LATI. An NPA 2 motif is present at residues 233 to 235; sequence NPA. Residues 255 to 275 form a helical membrane-spanning segment; that stretch reads IFWVGPLVGAAIAAFYHQYIL.

The protein belongs to the MIP/aquaporin (TC 1.A.8) family. PIP (TC 1.A.8.11) subfamily. As to quaternary structure, homomers. Can interact with PIP1-2 to form heteromers. As to expression, expressed in roots.

The protein localises to the cell membrane. Its function is as follows. Water channel required to facilitate the transport of water across cell membrane. Active as homomers. Increased activity when heteromerization with PIP1-2. This Zea mays (Maize) protein is Aquaporin PIP2-1 (PIP2-1).